The primary structure comprises 2896 residues: MAPPGSTLLPNSPAATRGPSLARLCALVDLCLGCSRCTQRLNESTYVLRRVEHDCSREILLARFKQATKSKVWRVVGCRPTFPRPLCYQVCHYYSPGLGCRRHRNRCTFARSREEALVWTFERQHNLQRLWLKAEVQGSGAQGGAGRAADAILTEFGGRFELLCSLCFRRCPPCICRVDPQGQCPEHGACPSLLAHVSAEGRRKQQFVVVRPRPRAGQPPAYCRFVGRGQPCWRGESRCQFAHSAVEMAVWEAEQLGGLQRGDLLTPPAPDGDGRTAPLGQPPGAQLYCPACLVTCHSQEAFENHCASSEHAQMVAFDQALPWEHRSPPPGLSKFELCPKPDLCEYGDACTKAHSAQELQEWVRRTQAVELRGQAAWQDGLVPYQERLLAEYQRSSSEVLVLAETLDGVRVTCNQPLMYQAQERKTQYSWTFAVHSEEPLLHVALLKQEPGADFSLVAPGLPPGRLYARGERFRVPSSTADFQVGVRVQAASFGTFEQWVVFDFGRRPVLLQKLGLQLGQGRRPGPCRNLALGHPEEMERWHTGNRHVVPGVERTAEQTALMAKYKGPALALEFNRSSVASGPISPTNYRQRMHQFLYEEEAAQQQLVAKLTLRGQVFLKTALQTPALNMLFAPPGALYAEVPVPSSLMPDTDQGFLLGRAVSTALVAPVPAPDNTVFEVRLERRASSEQALWLLLPARCCLALGLQPEARLVLEVQFQIDPMTFRLWHQAVDTLPEEQLVVPDLPTCALPRPWSVPPLRRGNRKQELAVALIAGWGPGDGRRVPPLLIYGPFGTGKTYTLAMASLEVIRRPETKVLICTHTNSAADIYIREYFHSHVSGGHPEATPLRVMYTDRPLSQTDPVTLQYCCLTDDRQAFRPPTRAELARHRVVVTTTSQARELRVPVGFFSHILIDEAAQMLECEALTPLAYASHGTRLVLAGDHMQVTPRLFSVARARAAEHTLLHRLFLCYQQETHEVARQSRLVFHENYRCTDAIVSFISRHFYVAKGNPIHARGKVPPHPRHYPLMFCHVAGSPDRDMSMASWLNLAEIAQVVEKVQEAYNTWPSCWGGREQRCICVVSHGAQVSALRQELRRRDLGQVSVGSFEILPGRQFRVVVLSTVHTCQSLLSPGALAPEFFTDARVLNTVLTRAQSQLVVVGDAVALCSFGACGKLWESFIRECVERHSVCPEGLSMEQVEQGVAQRRRWPPRGTQAGAAGNWEAAPEPVGDLAEEQAAVVTAMVKAEPGDEALSPASRDITATTAQTEAAAAPAGDAVKEDVVPGACAAGAAAAAGVESTEAEDAEADFWPWDGELNADDAILRELLDESQKVMVTVGEDGLLDTVARPESLQQARLYENLPPAALRKLLHAEPERYRHCSFVPETFERASAIPLDDASSGPIQVRGRLDCGMAFAGDEVLVQLLSGDKAPEGRLRGRVLGVLKRKRHELAFVCRMDTWDPRIMVPINGSVTKIFVAELKDPSQVPIYSLRKGRLQRVGLERLTAEARHSRLFWVQIVLWRQGFYYPLGIVREVLPEASTWEQGLRILGLEYSLRVPPSDQATITKVLQKYHTELGRVAGRREDCRAFLTFTVDPQGACNLDDALSVRDLGPRCEVAVHITDVASFVPRDGVLDVEARRQGAAFYAPGREPVPMLPASLCQDVLSLLPGRDRLAISLFLTMEKASGQLKSLRFAPSVVQSDRQLSYEEAEEVIRQHPGAGRELPARLDSVDACVVAACYFSRLLRRHRLRSDCFYEQPDEDGTLGFRAAHIMVKEYMIQFNRLVAEFLVGSECTRTVTPLRWQPAPRSQQLKALCEKHGDRVPLSLHLGHHLHGGGGSPPDTRLHLLASLWKQVQFAARTQDYEQMVDLVTTDDMHPFLAPAGRDLRKALERSAFGRCARGHQQQGGHYSLQVDWYTWATSPIRRYLDVVLQRQILLALGHGGSAYSARDIDGLCQAFSLQHALAQSYQRRARSLHLAVQLKAQPLDKLGFVVDVEAGSRCFRLLFPSNRETLPDPCPVPYGSLQLAEHPHALAGRPGLRLLWRRRVYSAQGSSPPLPLPGTVPDPHTLAVETALWKQLLELVELQRWPEAAALIQEKGEASQRRELVQVQRSHCGHFLEVARELGSGDTLQVQLGTSLQHGFLVPSPQLWTVAPGFSLCLEHVERPGDCFSGRVYRAPRDRYRDVDEYACVWEPFCALESATGAVAENDSVTLQHLSVSWEASRTPQGQLQGAFRLEAAFLEENCADINFSCCYLCIRLEGLPAPTASPRPGPSSLGPGLNVDPGTYTWVAHGQTQDWDQERRADRQEAPRRVHLFVHHMGMEKVPEEVLRPGTLFTVELLPKQLPDLRKEEAVRGLEEASPLVTSIALGRPVPQPLCRVIPSRFLERQTYNIPGGRHKLNPSQNVAVREALEKPFTVIQGPPGTGKTIVGLHIVFWFHKSNQEQVQPGGPPRGEKRLGGPCILYCGPSNKSVDVLAGLLLRRMELKPLRVYSEQAEASEFPVPRVGSRKLLRKSPREGRPNQSLRSITLHHRIRQAPNPYSSEIKAFDTRLQRGELFSREDLVWYKKVLWEARKFELDRHEVILCTCSCAASASLKILDVRQILVDEAGMATEPETLIPLVQFPQAEKVVLLGDHKQLRPVVKNERLQNLGLDRSLFERYHEDAHMLDTQYRMHEGICAFPSVAFYKSKLKTWQGLRRPPSVLGHAGKESCPVIFGHVQGHERSLLVSTDEGNENSKANLEEVAEVVRITKQLTLGRTVEPQDIAVLTPYNAQASEISKALRREGIAGVAVSSITKSQGSEWRYVLVSTVRTCAKSDLDQRPTKSWLKKFLGFVVDPNQVNVAVTRAQEGLCLIGDHLLLRCCPLWRSLLDFCEAQQTLVPAGQVRVCRRPTMPS.

2 consecutive C3H1-type zinc fingers follow at residues 90 to 114 and 217 to 246; these read VCHY…RSRE and GQPP…HSAV. The C2H2-type; atypical zinc finger occupies 287–311; that stretch reads LYCPACLVTCHSQEAFENHCASSEH. The C3H1-type 3 zinc-finger motif lies at 327-357; sequence SPPPGLSKFELCPKPDLCEYGDACTKAHSAQ. One can recognise a UvrD-like helicase ATP-binding domain in the interval 770-1126; the sequence is VALIAGWGPG…VVLSTVHTCQ (357 aa). Residue 791 to 798 participates in ATP binding; it reads GPFGTGKT. Residues 810 to 1306 are interaction with THRAP3; that stretch reads RRPETKVLIC…ESTEAEDAEA (497 aa). The short motif at 914 to 917 is the DEAA box element; it reads DEAA. Ser1253 is subject to Phosphoserine. 3 consecutive short sequence motifs (LXXLL motif) follow at residues 1322–1326, 1365–1369, and 1420–1424; these read LRELL, LRKLL, and LVQLL. The RNB domain occupies 1581-1938; sequence REDCRAFLTF…VLQRQILLAL (358 aa). The short motif at 2259–2263 is the LXXLL motif 4 element; the sequence is LEGLP. The tract at residues 2382–2896 is interaction with THRAP3; that stretch reads PSRFLERQTY…RVCRRPTMPS (515 aa). Positions 2400 to 2675 constitute a UvrD-like helicase ATP-binding 2 domain; it reads LNPSQNVAVR…HMLDTQYRMH (276 aa). 2421-2428 serves as a coordination point for ATP; the sequence is GPPGTGKT. An LXXLL motif 5 motif is present at residues 2476–2480; sequence LAGLL.

This sequence belongs to the DNA2/NAM7 helicase family. As to quaternary structure, interacts with PPARA (via DNA-binding domain) and PPARG; the interaction stimulates the transcriptional activity of PPARA and PPARG. Interacts with THRAP3; the interaction is direct and HELZ2 and THRAP3 synergistically enhance the transcriptional activity of PPARG. It is probably part of the peroxisome proliferator activated receptor alpha interacting complex (PRIC). Expressed in various tissues including heart, pancreas, skeletal muscle, colon, spleen, liver, kidney, lung, peripheral blood and placenta.

Its subcellular location is the cytoplasm. The catalysed reaction is Exonucleolytic cleavage in the 3'- to 5'-direction to yield nucleoside 5'-phosphates.. It carries out the reaction ATP + H2O = ADP + phosphate + H(+). Its function is as follows. Can degrade highly structured RNAs through its concerted ATP-dependent RNA helicase and 3' to 5' exoribonuclease activities. Shows a strong preference for pyrimidine over purine residues for its nuclease activity. Acts as a transcriptional coactivator for a number of nuclear receptors including PPARA, PPARG, THRA, THRB and RXRA. This chain is 3'-5' exoribonuclease HELZ2, found in Homo sapiens (Human).